Reading from the N-terminus, the 680-residue chain is DNA ligase (680 aa).

NAD(+)-binding positions include 35-39 (DAQYD), 84-85 (SL), and E115. Residue K117 is the N6-AMP-lysine intermediate of the active site. Residues R138, E174, K291, and K315 each contribute to the NAD(+) site. Zn(2+) is bound by residues C419, C422, C437, and C442. The BRCT domain maps to 601–680 (NKNMPFSGME…REFINMLEQS (80 aa)).

It belongs to the NAD-dependent DNA ligase family. LigA subfamily. Mg(2+) serves as cofactor. Requires Mn(2+) as cofactor.

The catalysed reaction is NAD(+) + (deoxyribonucleotide)n-3'-hydroxyl + 5'-phospho-(deoxyribonucleotide)m = (deoxyribonucleotide)n+m + AMP + beta-nicotinamide D-nucleotide.. DNA ligase that catalyzes the formation of phosphodiester linkages between 5'-phosphoryl and 3'-hydroxyl groups in double-stranded DNA using NAD as a coenzyme and as the energy source for the reaction. It is essential for DNA replication and repair of damaged DNA. This Dehalococcoides mccartyi (strain ATCC BAA-2100 / JCM 16839 / KCTC 5957 / BAV1) protein is DNA ligase.